Reading from the N-terminus, the 139-residue chain is Holo-[acyl-carrier-protein] synthase (139 aa).

Residues D8 and E61 each coordinate Mg(2+).

The protein belongs to the P-Pant transferase superfamily. AcpS family. Mg(2+) serves as cofactor.

The protein resides in the cytoplasm. It carries out the reaction apo-[ACP] + CoA = holo-[ACP] + adenosine 3',5'-bisphosphate + H(+). In terms of biological role, transfers the 4'-phosphopantetheine moiety from coenzyme A to a Ser of acyl-carrier-protein. The polypeptide is Holo-[acyl-carrier-protein] synthase (Rhodopseudomonas palustris (strain BisB5)).